Consider the following 155-residue polypeptide: Small ribosomal subunit protein eS19B (155 aa).

This sequence belongs to the eukaryotic ribosomal protein eS19 family.

This Drosophila melanogaster (Fruit fly) protein is Small ribosomal subunit protein eS19B (RpS19b).